A 611-amino-acid polypeptide reads, in one-letter code: Mitogen-activated protein kinase 10 (611 aa).

A Protein kinase domain is found at 25–316; that stretch reads YKIQEVIGKG…AEEALAHPYF (292 aa). ATP is bound by residues 31 to 39 and K54; that span reads IGKGSYGVV. The Proton acceptor role is filled by D151. T187 is subject to Phosphothreonine. The TXY motif lies at 187 to 189; sequence TDY. A Phosphotyrosine modification is found at Y189. Residues 394-481 are disordered; that stretch reads ENGGNGPVIP…RVVGPVLPYE (88 aa). Basic and acidic residues predominate over residues 426–439; the sequence is EQPRIGPSRDKPSD.

Belongs to the protein kinase superfamily. CMGC Ser/Thr protein kinase family. MAP kinase subfamily. Post-translationally, dually phosphorylated on Thr-187 and Tyr-189, which activates the enzyme.

The catalysed reaction is L-seryl-[protein] + ATP = O-phospho-L-seryl-[protein] + ADP + H(+). It carries out the reaction L-threonyl-[protein] + ATP = O-phospho-L-threonyl-[protein] + ADP + H(+). Its activity is regulated as follows. Activated by threonine and tyrosine phosphorylation. The sequence is that of Mitogen-activated protein kinase 10 (MPK10) from Oryza sativa subsp. japonica (Rice).